The sequence spans 699 residues: Elongation factor G (699 aa).

The tr-type G domain maps to 8–290 (ERYRNIGIMA…AVLDYLPSPV (283 aa)). GTP-binding positions include 17–24 (AHIDAGKT), 88–92 (DTPGH), and 142–145 (NKMD).

The protein belongs to the TRAFAC class translation factor GTPase superfamily. Classic translation factor GTPase family. EF-G/EF-2 subfamily.

Its subcellular location is the cytoplasm. In terms of biological role, catalyzes the GTP-dependent ribosomal translocation step during translation elongation. During this step, the ribosome changes from the pre-translocational (PRE) to the post-translocational (POST) state as the newly formed A-site-bound peptidyl-tRNA and P-site-bound deacylated tRNA move to the P and E sites, respectively. Catalyzes the coordinated movement of the two tRNA molecules, the mRNA and conformational changes in the ribosome. This is Elongation factor G from Acidithiobacillus ferrooxidans (strain ATCC 23270 / DSM 14882 / CIP 104768 / NCIMB 8455) (Ferrobacillus ferrooxidans (strain ATCC 23270)).